The sequence spans 22 residues: Melittin-related peptide FQ-22-1 (22 aa).

At Q22 the chain carries Glutamine amide.

As to expression, expressed by the skin glands.

It localises to the secreted. The chain is Melittin-related peptide FQ-22-1 from Rana arvalis (Moor frog).